The chain runs to 42 residues: Omega-theraphotoxin-Asp3a (42 aa).

3 disulfides stabilise this stretch: Cys-1-Cys-16, Cys-8-Cys-21, and Cys-15-Cys-30.

Belongs to the neurotoxin 14 (magi-1) family. 08 (Ltx-4) subfamily. As to expression, expressed by the venom gland.

The protein localises to the secreted. Its function is as follows. Inhibits voltage-gated calcium channels (Cav) in rat cerebellar granule cells. This Aphonopelma sp. (American tarantula) protein is Omega-theraphotoxin-Asp3a.